Consider the following 80-residue polypeptide: Large ribosomal subunit protein bL31 (80 aa).

Zn(2+)-binding residues include C16, C18, C38, and C41.

This sequence belongs to the bacterial ribosomal protein bL31 family. Type A subfamily. Part of the 50S ribosomal subunit. It depends on Zn(2+) as a cofactor.

Its function is as follows. Binds the 23S rRNA. This Mycobacterium avium (strain 104) protein is Large ribosomal subunit protein bL31.